Reading from the N-terminus, the 289-residue chain is Acetyl-coenzyme A carboxylase carboxyl transferase subunit beta (289 aa).

The 262-residue stretch at 28 to 289 (VMTKCPKCKK…QGGEMAVWQS (262 aa)) folds into the CoA carboxyltransferase N-terminal domain. The Zn(2+) site is built by Cys-32, Cys-35, Cys-51, and Cys-54. Residues 32-54 (CPKCKKIMYTKEVLKNLKVCVNC) form a C4-type zinc finger.

The protein belongs to the AccD/PCCB family. Acetyl-CoA carboxylase is a heterohexamer composed of biotin carboxyl carrier protein (AccB), biotin carboxylase (AccC) and two subunits each of ACCase subunit alpha (AccA) and ACCase subunit beta (AccD). It depends on Zn(2+) as a cofactor.

The protein localises to the cytoplasm. It catalyses the reaction N(6)-carboxybiotinyl-L-lysyl-[protein] + acetyl-CoA = N(6)-biotinyl-L-lysyl-[protein] + malonyl-CoA. It functions in the pathway lipid metabolism; malonyl-CoA biosynthesis; malonyl-CoA from acetyl-CoA: step 1/1. Its function is as follows. Component of the acetyl coenzyme A carboxylase (ACC) complex. Biotin carboxylase (BC) catalyzes the carboxylation of biotin on its carrier protein (BCCP) and then the CO(2) group is transferred by the transcarboxylase to acetyl-CoA to form malonyl-CoA. In Bacillus cereus (strain ZK / E33L), this protein is Acetyl-coenzyme A carboxylase carboxyl transferase subunit beta.